A 371-amino-acid polypeptide reads, in one-letter code: Protein SPATA31F3 (371 aa).

A helical transmembrane segment spans residues Ile-7 to Trp-29. Positions Leu-62–Gln-86 form a coiled coil. 2 stretches are compositionally biased toward polar residues: residues Leu-189–Gln-203 and Pro-244–Ser-266. 3 disordered regions span residues Leu-189–Gln-222, Tyr-240–Met-299, and Tyr-326–Ile-371. 2 positions are modified to phosphoserine: Ser-197 and Ser-198. Over residues Gln-277–Val-287 the composition is skewed to basic residues. Basic and acidic residues predominate over residues Thr-330–Ala-362.

It belongs to the SPATA31 family.

The protein localises to the membrane. This is Protein SPATA31F3 (Spata31f3) from Mus musculus (Mouse).